A 570-amino-acid polypeptide reads, in one-letter code: Sulfite reductase [NADPH] hemoprotein beta-component (570 aa).

[4Fe-4S] cluster contacts are provided by C434, C440, C479, and C483. A siroheme-binding site is contributed by C483.

The protein belongs to the nitrite and sulfite reductase 4Fe-4S domain family. In terms of assembly, alpha(8)-beta(8). The alpha component is a flavoprotein, the beta component is a hemoprotein. Siroheme is required as a cofactor. The cofactor is [4Fe-4S] cluster.

It catalyses the reaction hydrogen sulfide + 3 NADP(+) + 3 H2O = sulfite + 3 NADPH + 4 H(+). The protein operates within sulfur metabolism; hydrogen sulfide biosynthesis; hydrogen sulfide from sulfite (NADPH route): step 1/1. Its function is as follows. Component of the sulfite reductase complex that catalyzes the 6-electron reduction of sulfite to sulfide. This is one of several activities required for the biosynthesis of L-cysteine from sulfate. The protein is Sulfite reductase [NADPH] hemoprotein beta-component of Salmonella paratyphi B (strain ATCC BAA-1250 / SPB7).